A 428-amino-acid polypeptide reads, in one-letter code: Serine--tRNA ligase (428 aa).

236-238 (TAE) contributes to the L-serine binding site. 267 to 269 (RSE) lines the ATP pocket. L-serine is bound at residue Glu290. 354–357 (EISS) is an ATP binding site. An L-serine-binding site is contributed by Ser388.

Belongs to the class-II aminoacyl-tRNA synthetase family. Type-1 seryl-tRNA synthetase subfamily. Homodimer. The tRNA molecule binds across the dimer.

It is found in the cytoplasm. The catalysed reaction is tRNA(Ser) + L-serine + ATP = L-seryl-tRNA(Ser) + AMP + diphosphate + H(+). The enzyme catalyses tRNA(Sec) + L-serine + ATP = L-seryl-tRNA(Sec) + AMP + diphosphate + H(+). It functions in the pathway aminoacyl-tRNA biosynthesis; selenocysteinyl-tRNA(Sec) biosynthesis; L-seryl-tRNA(Sec) from L-serine and tRNA(Sec): step 1/1. In terms of biological role, catalyzes the attachment of serine to tRNA(Ser). Is also able to aminoacylate tRNA(Sec) with serine, to form the misacylated tRNA L-seryl-tRNA(Sec), which will be further converted into selenocysteinyl-tRNA(Sec). The sequence is that of Serine--tRNA ligase from Psychrobacter cryohalolentis (strain ATCC BAA-1226 / DSM 17306 / VKM B-2378 / K5).